Consider the following 608-residue polypeptide: tRNA (guanine(37)-N(1))-methyltransferase 1 (608 aa).

The disordered stretch occupies residues 207 to 229; the sequence is SRPKKKKRRKEEERSEGKKRTGK. The span at 216–229 shows a compositional bias: basic and acidic residues; it reads KEEERSEGKKRTGK. Residues Arg425, 463-464, 491-492, and Asn514 contribute to the S-adenosyl-L-methionine site; these read DL and DG.

This sequence belongs to the class I-like SAM-binding methyltransferase superfamily. TRM5/TYW2 family. Monomer.

Its subcellular location is the mitochondrion matrix. It is found in the nucleus. The protein localises to the cytoplasm. The catalysed reaction is guanosine(37) in tRNA + S-adenosyl-L-methionine = N(1)-methylguanosine(37) in tRNA + S-adenosyl-L-homocysteine + H(+). In terms of biological role, specifically methylates the N1 position of guanosine-37 in various cytoplasmic and mitochondrial tRNAs. Methylation is not dependent on the nature of the nucleoside 5' of the target nucleoside. This is the first step in the biosynthesis of wybutosine (yW), a modified base adjacent to the anticodon of tRNAs and required for accurate decoding. The protein is tRNA (guanine(37)-N(1))-methyltransferase 1 of Vitis vinifera (Grape).